The sequence spans 804 residues: DNA mismatch repair protein MutS (804 aa).

ATP is bound at residue G614–S621.

The protein belongs to the DNA mismatch repair MutS family.

In terms of biological role, this protein is involved in the repair of mismatches in DNA. It is possible that it carries out the mismatch recognition step. This protein has a weak ATPase activity. The sequence is that of DNA mismatch repair protein MutS from Ehrlichia ruminantium (strain Welgevonden).